We begin with the raw amino-acid sequence, 223 residues long: UPF0441 protein YgiB (223 aa).

The interval 201–223 (ESVAKQSAMQRSAAGTSTRSMGG) is disordered. Over residues 204–223 (AKQSAMQRSAAGTSTRSMGG) the composition is skewed to polar residues.

It belongs to the UPF0441 family.

The sequence is that of UPF0441 protein YgiB from Salmonella arizonae (strain ATCC BAA-731 / CDC346-86 / RSK2980).